Consider the following 269-residue polypeptide: Imidazoleglycerol-phosphate dehydratase 2, chloroplastic (269 aa).

Residues 1–51 constitute a chloroplast transit peptide; it reads MTTAPFLFPSLSRLHSARASSFPKPPVGSGAGVAFPARPYGSSLRLRSSVM. Substrate-binding positions include glutamate 83, 109–117, 135–139, arginine 161, and arginine 183; these read HMLDQLASH and HHSNE. 4 residues coordinate Mn(2+): histidine 109, histidine 135, histidine 136, and glutamate 139. Mn(2+) is bound by residues histidine 207, histidine 231, histidine 232, and glutamate 235. Substrate is bound by residues 231–239 and 261–263; these read HHIIEATFK and SSK.

The protein belongs to the imidazoleglycerol-phosphate dehydratase family. Mn(2+) serves as cofactor.

The protein resides in the plastid. The protein localises to the chloroplast. The catalysed reaction is D-erythro-1-(imidazol-4-yl)glycerol 3-phosphate = 3-(imidazol-4-yl)-2-oxopropyl phosphate + H2O. The protein operates within amino-acid biosynthesis; L-histidine biosynthesis; L-histidine from 5-phospho-alpha-D-ribose 1-diphosphate: step 6/9. The chain is Imidazoleglycerol-phosphate dehydratase 2, chloroplastic from Triticum aestivum (Wheat).